The chain runs to 399 residues: Aromatic-amino-acid aminotransferase (399 aa).

Positions 36, 67, 132, and 184 each coordinate substrate. Lys-247 bears the N6-(pyridoxal phosphate)lysine mark. Arg-375 provides a ligand contact to substrate.

The protein belongs to the class-I pyridoxal-phosphate-dependent aminotransferase family. As to quaternary structure, homodimer. Requires pyridoxal 5'-phosphate as cofactor.

It is found in the cytoplasm. The enzyme catalyses an aromatic L-alpha-amino acid + 2-oxoglutarate = an aromatic oxo-acid + L-glutamate. This chain is Aromatic-amino-acid aminotransferase (phhC), found in Pseudomonas aeruginosa (strain ATCC 15692 / DSM 22644 / CIP 104116 / JCM 14847 / LMG 12228 / 1C / PRS 101 / PAO1).